The chain runs to 618 residues: Cationic amino acid transporter 3 (618 aa).

Residues 1 to 36 (MLWQALRRFGQKLVRRRVLELGMGETRLARCLSTLD) are Cytoplasmic-facing. A helical membrane pass occupies residues 37-57 (LVALGVGSTLGAGVYVLAGEV). The Extracellular segment spans residues 58 to 61 (AKDK). Residues 62-82 (AGPSIVICFLVAALSSVLAGL) traverse the membrane as a helical segment. The Cytoplasmic portion of the chain corresponds to 83–107 (CYAEFGARVPGSGSAYLYSYVTVGE). A helical transmembrane segment spans residues 108-128 (LWAFTTGWNLILSYVIGTASV). The Extracellular portion of the chain corresponds to 129-162 (ARAWSSAFDNLIGNHISRTLKGTILLKMPHVLAE). Residues 163-183 (YPDFFALALVLLLTGLLVLGA) form a helical membrane-spanning segment. Residues 184-191 (SKSALVTK) lie on the Cytoplasmic side of the membrane. A helical membrane pass occupies residues 192–212 (VFTGMNLLVLSFVIISGFIKG). The Extracellular portion of the chain corresponds to 213 to 244 (ELRNWKLTKEDYCLTMSESNGTCSLDSMGSGG). The N-linked (GlcNAc...) asparagine glycan is linked to Asn232. Residues 245-265 (FMPFGLEGILRGAATCFYAFV) traverse the membrane as a helical segment. At 266–285 (GFDCIATTGEEAQNPQRSIP) the chain is on the cytoplasmic side. The helical transmembrane segment at 286 to 306 (MGIVISMFICFLAYFGVSSAL) threads the bilayer. The Extracellular portion of the chain corresponds to 307–335 (TLMMPYYKLHPESPLPEAFSYVGWEPARY). Residues 336-356 (LVAIGSLCALSTSLLGSMFPM) traverse the membrane as a helical segment. Residues 357–380 (PRVMYSMAEDGLLFRVLAKVHSVT) lie on the Cytoplasmic side of the membrane. A helical membrane pass occupies residues 381–401 (HIPIVATLVSGVIAAFMAFLF). At 402–406 (ELTDL) the chain is on the extracellular side. A helical membrane pass occupies residues 407–427 (VDLMSIGTLLAHSLVSICVLI). Residues 428–474 (LRYQPDQEMKSVEEEMELQEETLEAEKLTVQALFCPVNSIPTLLSGR) are Cytoplasmic-facing. The helical transmembrane segment at 475-495 (VVYVCSSLLAVLLTVLCLVLT) threads the bilayer. Over 496–506 (WWTTPLRSGDP) the chain is Extracellular. Residues 507 to 527 (VWVTVVVLILGLILAISGVIW) form a helical membrane-spanning segment. Over 528-539 (RQPQNRTPLHFK) the chain is Cytoplasmic. Residues 540-560 (VPAVPLLPLVSIFVNVYLMMQ) form a helical membrane-spanning segment. Residues 561 to 568 (MTAGTWAR) are Extracellular-facing. A helical membrane pass occupies residues 569–589 (FGIWMLIGFAIYFGYGIQHSM). Residues 590–618 (KEVKNHQTLPKTRAQTIDLDLTTSCVHSI) lie on the Cytoplasmic side of the membrane. Thr605 bears the Phosphothreonine mark. Position 617 is a phosphoserine (Ser617).

It belongs to the amino acid-polyamine-organocation (APC) superfamily. Cationic amino acid transporter (CAT) (TC 2.A.3.3) family. N-glycosylated. As to expression, expressed in adult brain and in a wide variety of embryonic tissues.

The protein localises to the cell membrane. It carries out the reaction L-arginine(in) = L-arginine(out). The catalysed reaction is L-lysine(in) = L-lysine(out). The enzyme catalyses L-ornithine(in) = L-ornithine(out). Its function is as follows. Uniporter that mediates the uptake of cationic L-amino acids such as L-arginine, L-lysine and L-ornithine. The transport is sodium ions- and pH-independent, moderately trans-stimulated and is mediated by passive diffusion. This chain is Cationic amino acid transporter 3, found in Mus musculus (Mouse).